Here is a 149-residue protein sequence, read N- to C-terminus: D-aminoacyl-tRNA deacylase (149 aa).

A Gly-cisPro motif, important for rejection of L-amino acids motif is present at residues 137–138 (GP).

Belongs to the DTD family. As to quaternary structure, homodimer.

Its subcellular location is the cytoplasm. The enzyme catalyses glycyl-tRNA(Ala) + H2O = tRNA(Ala) + glycine + H(+). It catalyses the reaction a D-aminoacyl-tRNA + H2O = a tRNA + a D-alpha-amino acid + H(+). An aminoacyl-tRNA editing enzyme that deacylates mischarged D-aminoacyl-tRNAs. Also deacylates mischarged glycyl-tRNA(Ala), protecting cells against glycine mischarging by AlaRS. Acts via tRNA-based rather than protein-based catalysis; rejects L-amino acids rather than detecting D-amino acids in the active site. By recycling D-aminoacyl-tRNA to D-amino acids and free tRNA molecules, this enzyme counteracts the toxicity associated with the formation of D-aminoacyl-tRNA entities in vivo and helps enforce protein L-homochirality. The chain is D-aminoacyl-tRNA deacylase from Clostridium novyi (strain NT).